The chain runs to 163 residues: Peptide deformylase 3 (163 aa).

Fe cation is bound by residues cysteine 91 and histidine 133. Residue glutamate 134 is part of the active site. Histidine 137 contacts Fe cation.

Belongs to the polypeptide deformylase family. Fe(2+) is required as a cofactor.

The enzyme catalyses N-terminal N-formyl-L-methionyl-[peptide] + H2O = N-terminal L-methionyl-[peptide] + formate. Functionally, removes the formyl group from the N-terminal Met of newly synthesized proteins. Requires at least a dipeptide for an efficient rate of reaction. N-terminal L-methionine is a prerequisite for activity but the enzyme has broad specificity at other positions. The protein is Peptide deformylase 3 of Shewanella oneidensis (strain ATCC 700550 / JCM 31522 / CIP 106686 / LMG 19005 / NCIMB 14063 / MR-1).